The following is a 911-amino-acid chain: Facilitated trehalose transporter Tret1 (911 aa).

A disordered region spans residues 1-256; sequence MSGRDNRGAG…RIGFQQQKAT (256 aa). At 1-446 the chain is on the cytoplasmic side; the sequence is MSGRDNRGAG…VYRPTTNPIY (446 aa). Residues 8 to 19 show a composition bias toward gly residues; sequence GAGGGGGGGGGG. Residues 32–50 show a composition bias toward basic and acidic residues; sequence KLKEKLTRAGEELGYHRVE. Composition is skewed to low complexity over residues 51-64, 76-129, and 156-166; these read SNLSTSNTGTSLDT, AAPQ…QQLR, and QQIHVQQQQQQ. Ser302, Ser303, and Ser304 each carry phosphoserine. Residues 334–355 form a disordered region; that stretch reads VLQGSSTDSDEEGDDAEHKRLI. Phosphoserine occurs at positions 374 and 376. Positions 380–402 are disordered; it reads FLTSRQNFQQQRSISTDSRKSRR. Residues 384–395 show a composition bias toward polar residues; sequence RQNFQQQRSIST. The helical transmembrane segment at 447-467 threads the bilayer; it reads IWTQVLAALSVSLGSLVVGFA. The Extracellular segment spans residues 468–494; that stretch reads SAYTSPALVSMTNTNLTSFVVTPQAAS. Asn482 is a glycosylation site (N-linked (GlcNAc...) asparagine). The helical transmembrane segment at 495-515 threads the bilayer; it reads WVGGIMPLAGLAGGIAGGPFI. Residues 516 to 527 lie on the Cytoplasmic side of the membrane; that stretch reads EYLGRRNTILAT. A helical transmembrane segment spans residues 528–548; sequence AVPFIVSWLLIACAVNVIMVL. The Extracellular segment spans residues 549-551; the sequence is CGR. A helical transmembrane segment spans residues 552–572; that stretch reads FLAGFCVGIASLSLPVYLGET. Residues 573 to 578 lie on the Cytoplasmic side of the membrane; the sequence is VQPEVR. Residues 579–599 traverse the membrane as a helical segment; it reads GTLGLLPTAFGNIGILLCFVA. Residues 600-606 are Extracellular-facing; the sequence is GTYMDWS. A helical membrane pass occupies residues 607–627; sequence MLAFLGASLPVPFLILMFLIP. At 628 to 690 the chain is on the cytoplasmic side; that stretch reads ETPRWYVSRG…ELLKRSNLKP (63 aa). The chain crosses the membrane as a helical span at residues 691 to 711; sequence LSISLGLMFFQQLSGINAVIF. Residues 712 to 727 are Extracellular-facing; the sequence is YTVQIFQDAGSTIDGN. A helical membrane pass occupies residues 728–748; sequence VCTIIVGVVNFAATFIATILI. Residues 749 to 754 are Cytoplasmic-facing; it reads DRAGRK. A helical membrane pass occupies residues 755-775; it reads VLLYVSNVMMVLTLFVLGGFF. The Extracellular segment spans residues 776 to 794; it reads YCKSSGMDTSNVGWLPLSC. A helical membrane pass occupies residues 795 to 815; sequence FVIYILGFSLGFGPIPWLMMG. The Cytoplasmic segment spans residues 816–821; that stretch reads EILPAK. A helical transmembrane segment spans residues 822–842; the sequence is IRGSAASVATAFNWSCTFVVT. Residues 843–855 are Extracellular-facing; the sequence is KSFQDMIDFMGAH. The helical transmembrane segment at 856-876 threads the bilayer; it reads GAFWMFGAICFIGLFFVIFYV. Residues 877–911 are Cytoplasmic-facing; it reads PETQGKTLEDIERKMMGRVRRMSSVANIKPLSFNM. Phosphoserine is present on residues Ser899 and Ser900.

It belongs to the major facilitator superfamily. Sugar transporter (TC 2.A.1.1) family. Trehalose transporter subfamily.

It is found in the cell membrane. Its function is as follows. Low-capacity facilitative transporter for trehalose. Does not transport maltose, sucrose or lactose. Mediates the bidirectional transfer of trehalose. Responsible for the transport of trehalose synthesized in the fat body and the incorporation of trehalose into other tissues that require a carbon source, thereby regulating trehalose levels in the hemolymph. This is Facilitated trehalose transporter Tret1 from Drosophila virilis (Fruit fly).